Here is a 427-residue protein sequence, read N- to C-terminus: Adenylosuccinate synthetase (427 aa).

Residues 12–18 (GDEGKGK) and 40–42 (GHT) contribute to the GTP site. Catalysis depends on D13, which acts as the Proton acceptor. Residues D13 and G40 each coordinate Mg(2+). Residues 13-16 (DEGK), 38-41 (NAGH), T128, R142, Q223, T238, and R302 each bind IMP. Catalysis depends on H41, which acts as the Proton donor. 298–304 (TTTGRPR) lines the substrate pocket. GTP-binding positions include R304, 330-332 (KLD), and 412-414 (AVG).

It belongs to the adenylosuccinate synthetase family. As to quaternary structure, homodimer. Mg(2+) serves as cofactor.

Its subcellular location is the cytoplasm. It carries out the reaction IMP + L-aspartate + GTP = N(6)-(1,2-dicarboxyethyl)-AMP + GDP + phosphate + 2 H(+). It participates in purine metabolism; AMP biosynthesis via de novo pathway; AMP from IMP: step 1/2. In terms of biological role, plays an important role in the de novo pathway of purine nucleotide biosynthesis. Catalyzes the first committed step in the biosynthesis of AMP from IMP. This chain is Adenylosuccinate synthetase, found in Heliobacterium modesticaldum (strain ATCC 51547 / Ice1).